The chain runs to 241 residues: Small ribosomal subunit protein uS3 (241 aa).

A KH type-2 domain is found at 39 to 108 (IREGVLKLLK…NLKVEVKVIE (70 aa)). The tract at residues 215–241 (SQRVSEKAPMNNDRRFNNKNNNRGGRK) is disordered. Residues 232–241 (NKNNNRGGRK) show a composition bias toward low complexity.

The protein belongs to the universal ribosomal protein uS3 family. As to quaternary structure, part of the 30S ribosomal subunit. Forms a tight complex with proteins S10 and S14.

In terms of biological role, binds the lower part of the 30S subunit head. Binds mRNA in the 70S ribosome, positioning it for translation. This is Small ribosomal subunit protein uS3 from Mesoplasma florum (strain ATCC 33453 / NBRC 100688 / NCTC 11704 / L1) (Acholeplasma florum).